The chain runs to 69 residues: UPF0248 protein AF_0420 (69 aa).

This sequence belongs to the UPF0248 family.

The protein is UPF0248 protein AF_0420 of Archaeoglobus fulgidus (strain ATCC 49558 / DSM 4304 / JCM 9628 / NBRC 100126 / VC-16).